The chain runs to 161 residues: Ribosome maturation factor RimP (161 aa).

The protein belongs to the RimP family.

The protein localises to the cytoplasm. In terms of biological role, required for maturation of 30S ribosomal subunits. This is Ribosome maturation factor RimP from Rickettsia rickettsii (strain Iowa).